The chain runs to 423 residues: Diaminobutyrate--2-oxoglutarate transaminase (423 aa).

Lysine 267 is subject to N6-(pyridoxal phosphate)lysine.

This sequence belongs to the class-III pyridoxal-phosphate-dependent aminotransferase family. In terms of assembly, homohexamer. Pyridoxal 5'-phosphate is required as a cofactor.

The catalysed reaction is L-2,4-diaminobutanoate + 2-oxoglutarate = L-aspartate 4-semialdehyde + L-glutamate. The protein operates within amine and polyamine biosynthesis; ectoine biosynthesis; L-ectoine from L-aspartate 4-semialdehyde: step 1/3. Functionally, catalyzes reversively the conversion of L-aspartate beta-semialdehyde (ASA) to L-2,4-diaminobutyrate (DABA) by transamination with L-glutamate. The protein is Diaminobutyrate--2-oxoglutarate transaminase (ectB) of Chromohalobacter salexigens (strain ATCC BAA-138 / DSM 3043 / CIP 106854 / NCIMB 13768 / 1H11).